Consider the following 325-residue polypeptide: GTP 3',8-cyclase (325 aa).

In terms of domain architecture, Radical SAM core spans 4 to 219; the sequence is TYQREINYLR…DAISAKLGPL (216 aa). Arginine 13 serves as a coordination point for GTP. Positions 20 and 24 each coordinate [4Fe-4S] cluster. Tyrosine 26 is an S-adenosyl-L-methionine binding site. Cysteine 27 serves as a coordination point for [4Fe-4S] cluster. Arginine 63 is a binding site for GTP. An S-adenosyl-L-methionine-binding site is contributed by glycine 67. Residue threonine 94 coordinates GTP. An S-adenosyl-L-methionine-binding site is contributed by serine 118. Position 155 (lysine 155) interacts with GTP. An S-adenosyl-L-methionine-binding site is contributed by methionine 189. Positions 254 and 257 each coordinate [4Fe-4S] cluster. Position 259 to 261 (259 to 261) interacts with GTP; that stretch reads RLR. Cysteine 271 is a [4Fe-4S] cluster binding site.

The protein belongs to the radical SAM superfamily. MoaA family. In terms of assembly, monomer and homodimer. [4Fe-4S] cluster serves as cofactor.

The enzyme catalyses GTP + AH2 + S-adenosyl-L-methionine = (8S)-3',8-cyclo-7,8-dihydroguanosine 5'-triphosphate + 5'-deoxyadenosine + L-methionine + A + H(+). Its pathway is cofactor biosynthesis; molybdopterin biosynthesis. In terms of biological role, catalyzes the cyclization of GTP to (8S)-3',8-cyclo-7,8-dihydroguanosine 5'-triphosphate. The chain is GTP 3',8-cyclase from Pelotomaculum thermopropionicum (strain DSM 13744 / JCM 10971 / SI).